The following is a 342-amino-acid chain: Flotillin-like protein FloA (342 aa).

Transmembrane regions (helical) follow at residues 18–38 (FFIF…GKFI) and 39–59 (SLWF…IIGM).

It belongs to the flotillin-like FloA family. As to quaternary structure, homooligomerizes.

Its subcellular location is the cell membrane. The protein localises to the membrane raft. In terms of biological role, found in functional membrane microdomains (FMM) that may be equivalent to eukaryotic membrane rafts. FMMs are highly dynamic and increase in number as cells age. Flotillins are thought to be important factors in membrane fluidity. The sequence is that of Flotillin-like protein FloA from Protochlamydia amoebophila (strain UWE25).